The primary structure comprises 254 residues: Imidazole glycerol phosphate synthase subunit HisF (254 aa).

Catalysis depends on residues Asp-13 and Asp-132.

This sequence belongs to the HisA/HisF family. In terms of assembly, heterodimer of HisH and HisF.

It localises to the cytoplasm. The catalysed reaction is 5-[(5-phospho-1-deoxy-D-ribulos-1-ylimino)methylamino]-1-(5-phospho-beta-D-ribosyl)imidazole-4-carboxamide + L-glutamine = D-erythro-1-(imidazol-4-yl)glycerol 3-phosphate + 5-amino-1-(5-phospho-beta-D-ribosyl)imidazole-4-carboxamide + L-glutamate + H(+). The protein operates within amino-acid biosynthesis; L-histidine biosynthesis; L-histidine from 5-phospho-alpha-D-ribose 1-diphosphate: step 5/9. IGPS catalyzes the conversion of PRFAR and glutamine to IGP, AICAR and glutamate. The HisF subunit catalyzes the cyclization activity that produces IGP and AICAR from PRFAR using the ammonia provided by the HisH subunit. The protein is Imidazole glycerol phosphate synthase subunit HisF of Sulfurovum sp. (strain NBC37-1).